The chain runs to 2045 residues: Non-reducing polyketide synthase pks27 (2045 aa).

The interval 10-247 (IVFGDLTCDS…LTIPIYAPYH (238 aa)) is N-terminal acylcarrier protein transacylase domain (SAT). The Ketosynthase family 3 (KS3) domain occupies 380-813 (HSKLAIIGYS…GGNSSVLIED (434 aa)). Catalysis depends on for beta-ketoacyl synthase activity residues C552, H687, and H731. A malonyl-CoA:ACP transacylase (MAT) domain region spans residues 913 to 1213 (FAFTGQGSQY…VPTLQRNKDT (301 aa)). The interval 1289–1422 (HKLVEEKKDG…ASITFPDAKA (134 aa)) is N-terminal hotdog fold. One can recognise a PKS/mFAS DH domain in the interval 1289-1599 (HKLVEEKKDG…AQGVPRRLMD (311 aa)). Residue H1321 is the Proton acceptor; for dehydratase activity of the active site. The tract at residues 1442–1599 (AARLNTDDRV…AQGVPRRLMD (158 aa)) is C-terminal hotdog fold. Residue D1511 is the Proton donor; for dehydratase activity of the active site. The interval 1612–1636 (APAGGTLNASQSAAANPAADPSAQA) is disordered. Positions 1619-1636 (NASQSAAANPAADPSAQA) are enriched in low complexity. A Carrier domain is found at 1635–1712 (QADSDNWQAA…ELEAFWKQGA (78 aa)). Residues 1640–1709 (NWQAALKIIS…TIKELEAFWK (70 aa)) form a product template (PT) domain region. At S1672 the chain carries O-(pantetheine 4'-phosphoryl)serine. The interval 1735–1776 (EAEVDQDKNSSDEDRSSLGTSSYEVISPNTTETTPEITKTSS) is disordered. The span at 1739–1750 (DQDKNSSDEDRS) shows a compositional bias: basic and acidic residues. Residues 1760 to 1776 (ISPNTTETTPEITKTSS) show a composition bias toward low complexity. The interval 1798–2039 (TLFLLPDGSG…AKRLSEMIEG (242 aa)) is thioesterase.

Requires pantetheine 4'-phosphate as cofactor.

It functions in the pathway secondary metabolite biosynthesis. In terms of biological role, non-reducing polyketide synthase (NRPKS); part of the gene cluster 27 that mediates the biosynthesis of asparasone A, a sclerotium-specific anthraquinone pigment important for sclerotial survival. Catalyzes the formation of the aromatic polyketide from acetyl coenzyme A and seven malonyl coenzyme A molecules. Through its product template (PT) domain, catalyzes the cyclization of polyketide backbone via C6-C11 aldolcondensation. This is Non-reducing polyketide synthase pks27 from Aspergillus flavus (strain ATCC 200026 / FGSC A1120 / IAM 13836 / NRRL 3357 / JCM 12722 / SRRC 167).